Consider the following 372-residue polypeptide: Lipoyl synthase (372 aa).

Residues Cys37, Cys42, Cys48, Cys63, Cys67, Cys70, and Ser292 each coordinate [4Fe-4S] cluster. The 233-residue stretch at 49–281 (WREGTATVML…ERAALEMGFL (233 aa)) folds into the Radical SAM core domain. The tract at residues 338–372 (LTAELDPDEPRPPVAPAPASASPARLVPAASLIRR) is disordered. Low complexity predominate over residues 354–372 (APASASPARLVPAASLIRR).

This sequence belongs to the radical SAM superfamily. Lipoyl synthase family. Requires [4Fe-4S] cluster as cofactor.

The protein resides in the cytoplasm. The enzyme catalyses [[Fe-S] cluster scaffold protein carrying a second [4Fe-4S](2+) cluster] + N(6)-octanoyl-L-lysyl-[protein] + 2 oxidized [2Fe-2S]-[ferredoxin] + 2 S-adenosyl-L-methionine + 4 H(+) = [[Fe-S] cluster scaffold protein] + N(6)-[(R)-dihydrolipoyl]-L-lysyl-[protein] + 4 Fe(3+) + 2 hydrogen sulfide + 2 5'-deoxyadenosine + 2 L-methionine + 2 reduced [2Fe-2S]-[ferredoxin]. Its pathway is protein modification; protein lipoylation via endogenous pathway; protein N(6)-(lipoyl)lysine from octanoyl-[acyl-carrier-protein]: step 2/2. Its function is as follows. Catalyzes the radical-mediated insertion of two sulfur atoms into the C-6 and C-8 positions of the octanoyl moiety bound to the lipoyl domains of lipoate-dependent enzymes, thereby converting the octanoylated domains into lipoylated derivatives. This is Lipoyl synthase from Sorangium cellulosum (strain So ce56) (Polyangium cellulosum (strain So ce56)).